The chain runs to 297 residues: MDLISSLSLGELALSFSRVPLFPVFDLSYFIVSIIYLKYEPGSVELSRRHPVASWLCAMLHCFGSYILADLLLGEPIIDYFSNSSSILLASGVWYLIFFCPLDLFYKCVCFLPVKLIFVAMKEVVRVRKIAVGIHHAHHYHHGWFIMIATGWVKGSGVALLSNLEQLLRGVWKPETNEILHMSFPTKASLYGAILFTLQQTRWLPVSKASLIFVFTMFMVSCKVFLTATHSHSSPFDVLEGYICPVLFGATWGGDHHHDNHGAPHGMGLGTQHSGLPAKAKEELSEGFRKKKTKKAD.

Residues methionine 1–arginine 18 are Lumenal-facing. The chain crosses the membrane as a helical span at residues valine 19 to tyrosine 39. The Cytoplasmic segment spans residues glutamate 40–proline 51. Residues valine 52 to leucine 72 form a helical membrane-spanning segment. At leucine 73–serine 85 the chain is on the lumenal side. Ca(2+) is bound at residue glycine 74. Residues serine 86–tyrosine 106 form a helical membrane-spanning segment. At lysine 107–glycine 143 the chain is on the cytoplasmic side. Lysine 122 and arginine 126 together coordinate a 1,2-diacyl-sn-glycero-3-phospho-(1D-myo-inositol-4,5-bisphosphate). The chain crosses the membrane as a helical span at residues tryptophan 144–leucine 164. The Lumenal portion of the chain corresponds to glutamate 165–asparagine 177. The chain crosses the membrane as a helical span at residues glutamate 178–leucine 198. Residues glutamine 199–lysine 208 are Cytoplasmic-facing. The chain crosses the membrane as a helical span at residues alanine 209–threonine 229. At histidine 230–serine 233 the chain is on the lumenal side. A helical membrane pass occupies residues serine 234 to glycine 254. Residues aspartate 255–aspartate 297 lie on the Cytoplasmic side of the membrane. Positions aspartate 259–aspartate 297 are disordered. The segment covering lysine 279–phenylalanine 288 has biased composition (basic and acidic residues).

The protein belongs to the TMEM38 family. As to quaternary structure, homotrimer; conformation seems to be controled by binding to diacylglycerol (DAG).

The protein localises to the sarcoplasmic reticulum membrane. Its subcellular location is the nucleus membrane. It carries out the reaction K(+)(in) = K(+)(out). Its activity is regulated as follows. Channel activity is activated by a change of voltage within the sarcoplasmic reticulum lumen and blocked by luminal high Ca(2+) levels. Intracellular monovalent cation channel required for maintenance of rapid intracellular calcium release. Acts as a potassium counter-ion channel that functions in synchronization with calcium release from intracellular stores. Opened by a change of voltage within the sarcoplasmic reticulum lumen. The polypeptide is Trimeric intracellular cation channel type A (Rattus norvegicus (Rat)).